The sequence spans 490 residues: Cytochrome P450 71B28 (490 aa).

A helical transmembrane segment spans residues Met1–Leu21. Cys440 is a heme binding site.

It belongs to the cytochrome P450 family. Heme serves as cofactor.

The protein resides in the membrane. This chain is Cytochrome P450 71B28 (CYP71B28), found in Arabidopsis thaliana (Mouse-ear cress).